A 353-amino-acid polypeptide reads, in one-letter code: MSHILDKIDTVYPFPPKPIPLSEEEKSSYIASIKELLKQKDAVLIAHYYTDPEIQALAEETGGFVGDSLEMAKFGNRHPASTLIIAGVRFMGESAKILTPEKRILMPTLEAECSLDLGCPADKFSEFCDAHPDHTVVVYANTSAAVKARADWVVTSSIALEIVEHLDAEDKPIIWGPDRHLGSYIANKTGADMLLWQGECVVHDEFSADALRKMKSVYPDAAILVHPESPASVVELADAVGSTSQLIKAAKELPYQQMIVATDKGIFFKMQQLVPEKELIEAPTAGAGATCRSCAHCPWMAMNGLKAIEKALSEGGEEHEIFVDEALRVKSLIPLNRMLDFAEQLNMQVKGNA.

The iminosuccinate site is built by H47 and S68. C113 is a [4Fe-4S] cluster binding site. Iminosuccinate is bound by residues 139-141 and S156; that span reads YAN. C200 is a binding site for [4Fe-4S] cluster. Iminosuccinate-binding positions include 226 to 228 and T243; that span reads HPE. Residue C297 coordinates [4Fe-4S] cluster.

It belongs to the quinolinate synthase family. Type 1 subfamily. [4Fe-4S] cluster serves as cofactor.

The protein resides in the cytoplasm. It carries out the reaction iminosuccinate + dihydroxyacetone phosphate = quinolinate + phosphate + 2 H2O + H(+). The protein operates within cofactor biosynthesis; NAD(+) biosynthesis; quinolinate from iminoaspartate: step 1/1. In terms of biological role, catalyzes the condensation of iminoaspartate with dihydroxyacetone phosphate to form quinolinate. The polypeptide is Quinolinate synthase (Vibrio parahaemolyticus serotype O3:K6 (strain RIMD 2210633)).